The following is a 370-amino-acid chain: 3-isopropylmalate dehydrogenase (370 aa).

76–89 contributes to the NAD(+) binding site; sequence GPKWDQNPSELRPE. Residues R96, R106, R134, and D224 each coordinate substrate. Mg(2+) is bound by residues D224, D248, and D252. 282–294 contributes to the NAD(+) binding site; sequence GSAPDIAGQNIAN.

This sequence belongs to the isocitrate and isopropylmalate dehydrogenases family. LeuB type 1 subfamily. Homodimer. Mg(2+) is required as a cofactor. Mn(2+) serves as cofactor.

Its subcellular location is the cytoplasm. It catalyses the reaction (2R,3S)-3-isopropylmalate + NAD(+) = 4-methyl-2-oxopentanoate + CO2 + NADH. It functions in the pathway amino-acid biosynthesis; L-leucine biosynthesis; L-leucine from 3-methyl-2-oxobutanoate: step 3/4. Its function is as follows. Catalyzes the oxidation of 3-carboxy-2-hydroxy-4-methylpentanoate (3-isopropylmalate) to 3-carboxy-4-methyl-2-oxopentanoate. The product decarboxylates to 4-methyl-2 oxopentanoate. This Bacillus licheniformis (strain ATCC 14580 / DSM 13 / JCM 2505 / CCUG 7422 / NBRC 12200 / NCIMB 9375 / NCTC 10341 / NRRL NRS-1264 / Gibson 46) protein is 3-isopropylmalate dehydrogenase.